The primary structure comprises 186 residues: ADP-ribosylation factor-like protein 6 (186 aa).

A lipid anchor (N-myristoyl glycine) is attached at Gly2. GTP-binding positions include 24-31, Thr50, 69-73, Gly72, 130-133, and Ala164; these read GLDNSGKT, DMSGQ, and NKMD. Thr50 contributes to the Mg(2+) binding site.

Belongs to the small GTPase superfamily. Arf family. As to quaternary structure, interacts with SEC61B, ARL6IP1, ARL6IP2, ARL6IP3, ARL6IP4 ARL6IP5 and ARL6IP6. Interacts (GTP-bound form) with the BBSome a complex that contains BBS1, BBS2, BBS4, BBS5, BBS7, BBS8/TTC8, BBS9 and BBIP10. Interacts (GTP-free form) with IFT27.

It localises to the cell projection. Its subcellular location is the cilium membrane. The protein resides in the cytoplasm. The protein localises to the cytoskeleton. It is found in the cilium axoneme. It localises to the cilium basal body. Involved in membrane protein trafficking at the base of the ciliary organelle. Mediates recruitment onto plasma membrane of the BBSome complex which would constitute a coat complex required for sorting of specific membrane proteins to the primary cilia. Together with the BBSome complex and LTZL1, controls SMO ciliary trafficking and contributes to the sonic hedgehog (SHH) pathway regulation. May regulate cilia assembly and disassembly and subsequent ciliary signaling events such as the Wnt signaling cascade. Isoform 2 may be required for proper retinal function and organization. The protein is ADP-ribosylation factor-like protein 6 (ARL6) of Pongo abelii (Sumatran orangutan).